Here is a 512-residue protein sequence, read N- to C-terminus: MAIVSQISRFITFTIISMGYSVLAVGVALTIHILSQLIVPKNPNEPPNVFSLIPVLGNAVQFGMNPVAFLQECQKKYGDVFTFTMVGKRVTVCLGADGNQFVFNSKQNLSSAAEAYNHMTKYVFGPDVVYDAPHAVFMEQKKFIKAGLNSDCFRQHVPMIVQETEEFFKKFNKPTGFIEAYETFGSLIIYTASRCLMGKEIRASLDGNVAKLYYDLDQGFKPINFIFPNLPLPSYRRRDVACKKMADLYSSIIQRRKDEKDNNNADLLQALMDATYKDGTHIPDHHIAGMMIAVLFGGQHTSATTSAWTILELANRPDIIKALREEQIEKLGSLKADLTFDNLKDLPLLEAAIRETLRLHPPIFQMMRRVVADKIVYEKNGMEIPKGNFICAAPGVTQVDPTYFNEPTTYNPYRWIEKTDPVHQLEQGDDANIDYGFGAVGISSKSPFLPFGAGRHRCIGEQFGYLQLKTVISTFIRTFDFDLDGKSVPKSDYTSMVVVPEHTAKVRYTWRE.

C458 is a binding site for heme.

Belongs to the cytochrome P450 family. Heme serves as cofactor.

It localises to the membrane. The enzyme catalyses a 14alpha-methyl steroid + 3 reduced [NADPH--hemoprotein reductase] + 3 O2 = a Delta(14) steroid + formate + 3 oxidized [NADPH--hemoprotein reductase] + 4 H2O + 4 H(+). It carries out the reaction a 14alpha-methyl steroid + reduced [NADPH--hemoprotein reductase] + O2 = a 14alpha-hydroxymethyl steroid + oxidized [NADPH--hemoprotein reductase] + H2O + H(+). It catalyses the reaction a 14alpha-hydroxymethyl steroid + reduced [NADPH--hemoprotein reductase] + O2 = a 14alpha-formyl steroid + oxidized [NADPH--hemoprotein reductase] + 2 H2O + H(+). The catalysed reaction is a 14alpha-formyl steroid + reduced [NADPH--hemoprotein reductase] + O2 = a Delta(14) steroid + formate + oxidized [NADPH--hemoprotein reductase] + H2O + 2 H(+). The enzyme catalyses lanosterol + 3 reduced [NADPH--hemoprotein reductase] + 3 O2 = 4,4-dimethyl-5alpha-cholesta-8,14,24-trien-3beta-ol + formate + 3 oxidized [NADPH--hemoprotein reductase] + 4 H2O + 4 H(+). It carries out the reaction lanosterol + reduced [NADPH--hemoprotein reductase] + O2 = 32-hydroxylanosterol + oxidized [NADPH--hemoprotein reductase] + H2O + H(+). It catalyses the reaction 32-hydroxylanosterol + reduced [NADPH--hemoprotein reductase] + O2 = 32-oxolanosterol + oxidized [NADPH--hemoprotein reductase] + 2 H2O + H(+). The catalysed reaction is 32-oxolanosterol + reduced [NADPH--hemoprotein reductase] + O2 = 4,4-dimethyl-5alpha-cholesta-8,14,24-trien-3beta-ol + formate + oxidized [NADPH--hemoprotein reductase] + H2O + 2 H(+). The enzyme catalyses eburicol + 3 reduced [NADPH--hemoprotein reductase] + 3 O2 = 14-demethyleburicol + formate + 3 oxidized [NADPH--hemoprotein reductase] + 4 H2O + 4 H(+). It carries out the reaction eburicol + reduced [NADPH--hemoprotein reductase] + O2 = 32-hydroxyeburicol + oxidized [NADPH--hemoprotein reductase] + H2O + H(+). It catalyses the reaction 32-hydroxyeburicol + reduced [NADPH--hemoprotein reductase] + O2 = 32-oxoeburicol + oxidized [NADPH--hemoprotein reductase] + 2 H2O + H(+). The catalysed reaction is 32-oxoeburicol + reduced [NADPH--hemoprotein reductase] + O2 = 14-demethyleburicol + formate + oxidized [NADPH--hemoprotein reductase] + H2O + 2 H(+). It functions in the pathway steroid biosynthesis; zymosterol biosynthesis; zymosterol from lanosterol: step 1/6. Its function is as follows. Sterol 14alpha-demethylase that plays a critical role in the third module of ergosterol biosynthesis pathway, being ergosterol the major sterol component in fungal membranes that participates in a variety of functions. The third module or late pathway involves the ergosterol synthesis itself through consecutive reactions that mainly occur in the endoplasmic reticulum (ER) membrane. In filamentous fungi, during the initial step of this module, lanosterol (lanosta-8,24-dien-3beta-ol) can be metabolized to eburicol. Sterol 14alpha-demethylase catalyzes the three-step oxidative removal of the 14alpha-methyl group (C-32) of both these sterols in the form of formate, and converts eburicol and lanosterol to 14-demethyleburicol (4,4,24-trimethylergosta-8,14,24(28)-trienol) and 4,4-dimethyl-5alpha-cholesta-8,14,24-trien-3beta-ol, respectively, which are further metabolized by other enzymes in the pathway to ergosterol. Can also use substrates not intrinsic to fungi, such as 24,25-dihydrolanosterol (DHL), producing 4,4-dimethyl-8,14-cholestadien-3-beta-ol, but at lower rates than the endogenous substrates. The polypeptide is Lanosterol 14-alpha demethylase (CYP51) (Cunninghamella elegans).